Reading from the N-terminus, the 542-residue chain is MAKMIAFDEEARRGLERGMNQLADAVRVTLGPKGRNVVLEKKWGVPTITNDGVSIAKEIELEDPYEKIGAELVKEVAKKTNDVAGDGTTTATILAQALVREGLRNVAAGANPLGLKKGIEVAVERVSEELSKQAKEVETKEQIASTASISAGDSAIGGLIAEALDKVGKEGVVTVEESNTFGLELELTEGMRFDKGYISPYFVTDADRQEAVLDDPYILIVNSKIAAVKDLLPLLEKVMQTSKPLVIISEDVEGEALATLVVNKIRGTFKSVAVKAPGFGDRRKAILGDIAILTGGQVISEDVGLKLESTSLDLLGRARKIVVTKDETTVVEGSGDPDQIAGRVSQIRNEIDKSDSDYDREKLQERLAKLAGGVAVIKVGAATEVELKEKKHRIEDAVSNAKAAVEEGIVAGGGVALLQASITAFEKLDLSGDEATGARIVALALAAPLRQIASNAGFEGGVVVEKVRDLPVGHGLNAATGEYVDLIATGIIDPVKVTRSALQNAASIAGLFLTVEVVVADRPSAGAAEGGDGAGAMAGMGF.

ATP-binding positions include 29 to 32, 86 to 90, glycine 413, 477 to 479, and aspartate 493; these read TLGP, DGTTT, and NAA.

The protein belongs to the chaperonin (HSP60) family. In terms of assembly, forms a cylinder of 14 subunits composed of two heptameric rings stacked back-to-back. Interacts with the co-chaperonin GroES.

Its subcellular location is the cytoplasm. It catalyses the reaction ATP + H2O + a folded polypeptide = ADP + phosphate + an unfolded polypeptide.. Together with its co-chaperonin GroES, plays an essential role in assisting protein folding. The GroEL-GroES system forms a nano-cage that allows encapsulation of the non-native substrate proteins and provides a physical environment optimized to promote and accelerate protein folding. The protein is Chaperonin GroEL 2 of Frankia alni (strain DSM 45986 / CECT 9034 / ACN14a).